We begin with the raw amino-acid sequence, 445 residues long: MMKTLLLLVGLLLTWDNGRVLGDQAVSDTELQEMSTEGSKYINKEIKNALKGVKQIKTLIEQTNEERKSLLSNLEEAKKKKEDALNDTKDSETKLKASQGVCNDTMMALWEECKPCLKQTCMKFYARVCRSGSGLVGHQLEEFLNQSSPFYFWMNGDRIDSLLENDRQQTHALDVMQDSFNRASSIMDELFQDRFFTREPQDTYHYSPFSLFQRRPFFNPKFRIARNIIPFPRFQPLNFHDMFQPFFDMIHQAQQAMDVNLHRIPYHFPIEFPEEDNRTVCKEIRHNSTGCLKMKDQCEKCQEILSVDCSSNNPAQVQLRQELSNSLQIAEKFTKLYDELLQSYQEKMFNTSSLLKQLNEQFSWVSQLANLTQSEDPFYLQVTTVGSQTSDSNVPVGFTKVVVKLFDSDPITVMIPEAVSRNNPKFMETVAEKALQEYRQKHREE.

An N-terminal signal peptide occupies residues 1–22 (MMKTLLLLVGLLLTWDNGRVLG). Residues 78 to 81 (KKKK) carry the Nuclear localization signal motif. 2 N-linked (GlcNAc...) asparagine glycosylation sites follow: Asn86 and Asn103. 5 cysteine pairs are disulfide-bonded: Cys102–Cys309, Cys113–Cys301, Cys116–Cys298, Cys121–Cys291, and Cys129–Cys281. Ser133 is subject to Phosphoserine. N-linked (GlcNAc...) asparagine glycans are attached at residues Asn145, Asn277, Asn287, Asn350, and Asn370. Ser392 carries the phosphoserine modification. The Nuclear localization signal signature appears at 439–443 (RQKHR).

This sequence belongs to the clusterin family. Antiparallel disulfide-linked heterodimer of an alpha chain and a beta chain. Self-associates and forms higher oligomers. Interacts with a broad range of misfolded proteins, including APP, APOC2 and LYZ. Slightly acidic pH promotes interaction with misfolded proteins. Forms high-molecular weight oligomers upon interaction with misfolded proteins. Interacts with APOA1, LRP2, CLUAP1 and PON1. Interacts with the complement membrane attack complex. Interacts (via alpha chain) with XRCC6. Interacts with SYVN1, COMMD1, BTRC, CUL1 and with ubiquitin and SCF (SKP1-CUL1-F-box protein) E3 ubiquitin-protein ligase complexes. Interacts (via alpha chain) with BAX in stressed cells, where BAX undergoes a conformation change leading to association with the mitochondrial membrane. Does not interact with BAX in unstressed cells. Found in a complex with LTF, CLU, EPPIN and SEMG1. Interacts (immaturely glycosylated pre-secreted form) with HSPA5; this interaction promotes CLU stability and facilitates stress-induced CLU retrotranslocation from the secretory pathway to the mitochondria, thereby reducing stress-induced apoptosis by stabilizing mitochondrial membrane integrity. Interacts with BCL2L1; this interaction releases and activates BAX and promotes cell death. Interacts with TGFBR2 and ACVR1. Interacts (secreted form) with STMN3; this interaction may act as an important modulator during neuronal differentiation. Interacts with VLDLR and LRP8. Post-translationally, proteolytically cleaved on its way through the secretory system, probably within the Golgi lumen. Proteolytic cleavage is not necessary for its chaperone activity. All non-secreted forms are not proteolytically cleaved. Chaperone activity of uncleaved forms is dependent on a non-reducing environment. This proteolytic maturation is disulfide bond formation dependent. In terms of processing, polyubiquitinated, leading to proteasomal degradation. Under cellular stress, the intracellular level of cleaved form is reduced due to proteasomal degradation. Heavily N-glycosylated. About 30% of the protein mass is comprised of complex N-linked carbohydrate. Endoplasmic reticulum (ER) stress induces changes in glycosylation status and increases level of hypoglycosylated forms. Core carbohydrates are essential for chaperone activity. Non-secreted forms are hypoglycosylated or unglycosylated.

It is found in the secreted. The protein localises to the nucleus. It localises to the cytoplasm. The protein resides in the mitochondrion membrane. Its subcellular location is the cytosol. It is found in the microsome. The protein localises to the endoplasmic reticulum. It localises to the mitochondrion. The protein resides in the perinuclear region. Its subcellular location is the cytoplasmic vesicle. It is found in the secretory vesicle. The protein localises to the chromaffin granule. Its function is as follows. Functions as extracellular chaperone that prevents aggregation of non native proteins. Prevents stress-induced aggregation of blood plasma proteins. Inhibits formation of amyloid fibrils by APP, APOC2, B2M, CALCA, CSN3, SNCA and aggregation-prone LYZ variants (in vitro). Does not require ATP. Maintains partially unfolded proteins in a state appropriate for subsequent refolding by other chaperones, such as HSPA8/HSC70. Does not refold proteins by itself. Binding to cell surface receptors triggers internalization of the chaperone-client complex and subsequent lysosomal or proteasomal degradation. When secreted, protects cells against apoptosis and against cytolysis by complement: inhibits assembly of the complement membrane attack complex (MAC) by preventing polymerization of C9 pore component of the MAC complex. Intracellular forms interact with ubiquitin and SCF (SKP1-CUL1-F-box protein) E3 ubiquitin-protein ligase complexes and promote the ubiquitination and subsequent proteasomal degradation of target proteins. Promotes proteasomal degradation of COMMD1 and IKBKB. Modulates NF-kappa-B transcriptional activity. Following stress, promotes apoptosis. Inhibits apoptosis when associated with the mitochondrial membrane by interference with BAX-dependent release of cytochrome c into the cytoplasm. Plays a role in the regulation of cell proliferation. An intracellular form suppresses stress-induced apoptosis by stabilizing mitochondrial membrane integrity through interaction with HSPA5. Secreted form does not affect caspase or BAX-mediated intrinsic apoptosis and TNF-induced NF-kappa-B-activity. Secreted form act as an important modulator during neuronal differentiation through interaction with STMN3. Plays a role in the clearance of immune complexes that arise during cell injury. In Canis lupus familiaris (Dog), this protein is Clusterin (CLU).